A 704-amino-acid polypeptide reads, in one-letter code: Elongation factor G (704 aa).

Residues 8-291 (DKVRNIGIMA…TVVECLPSPV (284 aa)) enclose the tr-type G domain. Residues 17–24 (AHIDAGKT), 90–94 (DTPGH), and 144–147 (NKMD) contribute to the GTP site.

The protein belongs to the TRAFAC class translation factor GTPase superfamily. Classic translation factor GTPase family. EF-G/EF-2 subfamily.

Its subcellular location is the cytoplasm. In terms of biological role, catalyzes the GTP-dependent ribosomal translocation step during translation elongation. During this step, the ribosome changes from the pre-translocational (PRE) to the post-translocational (POST) state as the newly formed A-site-bound peptidyl-tRNA and P-site-bound deacylated tRNA move to the P and E sites, respectively. Catalyzes the coordinated movement of the two tRNA molecules, the mRNA and conformational changes in the ribosome. The chain is Elongation factor G from Prosthecochloris aestuarii (strain DSM 271 / SK 413).